The chain runs to 226 residues: Enolase-phosphatase E1 (226 aa).

Belongs to the HAD-like hydrolase superfamily. MasA/MtnC family. As to quaternary structure, monomer. Requires Mg(2+) as cofactor.

The catalysed reaction is 5-methylsulfanyl-2,3-dioxopentyl phosphate + H2O = 1,2-dihydroxy-5-(methylsulfanyl)pent-1-en-3-one + phosphate. The protein operates within amino-acid biosynthesis; L-methionine biosynthesis via salvage pathway; L-methionine from S-methyl-5-thio-alpha-D-ribose 1-phosphate: step 3/6. Its pathway is amino-acid biosynthesis; L-methionine biosynthesis via salvage pathway; L-methionine from S-methyl-5-thio-alpha-D-ribose 1-phosphate: step 4/6. Its function is as follows. Bifunctional enzyme that catalyzes the enolization of 2,3-diketo-5-methylthiopentyl-1-phosphate (DK-MTP-1-P) into the intermediate 2-hydroxy-3-keto-5-methylthiopentenyl-1-phosphate (HK-MTPenyl-1-P), which is then dephosphorylated to form the acireductone 1,2-dihydroxy-3-keto-5-methylthiopentene (DHK-MTPene). In Shewanella sp. (strain ANA-3), this protein is Enolase-phosphatase E1.